The sequence spans 474 residues: Pyruvate kinase (474 aa).

Position 33 (arginine 33) interacts with substrate. Positions 35, 37, and 67 each coordinate K(+). 35–38 (NFSH) lines the ATP pocket. Residues arginine 74 and lysine 155 each contribute to the ATP site. Glutamate 220 provides a ligand contact to Mg(2+). The substrate site is built by glycine 243, aspartate 244, and threonine 276. Aspartate 244 contacts Mg(2+).

This sequence belongs to the pyruvate kinase family. As to quaternary structure, homotetramer. Mg(2+) serves as cofactor. It depends on K(+) as a cofactor.

The enzyme catalyses pyruvate + ATP = phosphoenolpyruvate + ADP + H(+). Its pathway is carbohydrate degradation; glycolysis; pyruvate from D-glyceraldehyde 3-phosphate: step 5/5. The sequence is that of Pyruvate kinase (pyk) from Corynebacterium efficiens (strain DSM 44549 / YS-314 / AJ 12310 / JCM 11189 / NBRC 100395).